Consider the following 210-residue polypeptide: ATP phosphoribosyltransferase (210 aa).

Belongs to the ATP phosphoribosyltransferase family. Short subfamily. As to quaternary structure, heteromultimer composed of HisG and HisZ subunits.

It is found in the cytoplasm. It carries out the reaction 1-(5-phospho-beta-D-ribosyl)-ATP + diphosphate = 5-phospho-alpha-D-ribose 1-diphosphate + ATP. The protein operates within amino-acid biosynthesis; L-histidine biosynthesis; L-histidine from 5-phospho-alpha-D-ribose 1-diphosphate: step 1/9. In terms of biological role, catalyzes the condensation of ATP and 5-phosphoribose 1-diphosphate to form N'-(5'-phosphoribosyl)-ATP (PR-ATP). Has a crucial role in the pathway because the rate of histidine biosynthesis seems to be controlled primarily by regulation of HisG enzymatic activity. This Picosynechococcus sp. (strain ATCC 27264 / PCC 7002 / PR-6) (Agmenellum quadruplicatum) protein is ATP phosphoribosyltransferase.